Here is a 347-residue protein sequence, read N- to C-terminus: Serpentine receptor class beta-2 (347 aa).

7 consecutive transmembrane segments (helical) span residues 27–47, 62–82, 108–128, 146–166, 194–214, 246–266, and 288–308; these read IAQL…YIFL, FLLV…AFLF, GNLS…GFSI, FLGP…LYHV, FWEL…FLLV, LIVS…TIFV, and ITVP…LSFM.

Belongs to the nematode receptor-like protein srb family.

It localises to the membrane. The chain is Serpentine receptor class beta-2 (srb-2) from Caenorhabditis elegans.